Consider the following 214-residue polypeptide: Probable GTP-binding protein EngB (214 aa).

The region spanning Gly31–Ala214 is the EngB-type G domain. GTP contacts are provided by residues Gly39–Ser46, Gly66–Glu70, Asp93–Gly96, Thr160–Asp163, and Thr194–Ser196. The Mg(2+) site is built by Ser46 and Thr68.

Belongs to the TRAFAC class TrmE-Era-EngA-EngB-Septin-like GTPase superfamily. EngB GTPase family. Mg(2+) serves as cofactor.

Necessary for normal cell division and for the maintenance of normal septation. This chain is Probable GTP-binding protein EngB, found in Bartonella tribocorum (strain CIP 105476 / IBS 506).